Here is a 241-residue protein sequence, read N- to C-terminus: 1-(5-phosphoribosyl)-5-[(5-phosphoribosylamino)methylideneamino] imidazole-4-carboxamide isomerase (241 aa).

Asp8 serves as the catalytic Proton acceptor. The active-site Proton donor is Asp127.

The protein belongs to the HisA/HisF family.

The protein localises to the cytoplasm. The catalysed reaction is 1-(5-phospho-beta-D-ribosyl)-5-[(5-phospho-beta-D-ribosylamino)methylideneamino]imidazole-4-carboxamide = 5-[(5-phospho-1-deoxy-D-ribulos-1-ylimino)methylamino]-1-(5-phospho-beta-D-ribosyl)imidazole-4-carboxamide. Its pathway is amino-acid biosynthesis; L-histidine biosynthesis; L-histidine from 5-phospho-alpha-D-ribose 1-diphosphate: step 4/9. This is 1-(5-phosphoribosyl)-5-[(5-phosphoribosylamino)methylideneamino] imidazole-4-carboxamide isomerase from Thermotoga petrophila (strain ATCC BAA-488 / DSM 13995 / JCM 10881 / RKU-1).